The following is a 522-amino-acid chain: F-box-like/WD repeat-containing protein TBL1Y (522 aa).

Position 2 is an N-acetylserine (Ser-2). The LisH domain maps to 4-36 (TSDEVNFLVYRYLQESGFSHSAFTFGIESHISQ). The region spanning 41-86 (GTLVPPSALISILQKGLQYVEAEISINKDGTVFDSRPIESLSLIVA) is the F-box-like domain. Position 102 is an N6-acetyllysine (Lys-102). Phosphoserine is present on Ser-130. WD repeat units follow at residues 177-216 (GHES…NGGS), 233-272 (PSNK…ASTL), 274-313 (QHKG…AKQQ), 316-354 (FHSA…PVKT), 357-396 (GHTN…CVHD), 399-447 (AHSK…CTHT), 450-489 (KHQE…LVHS), and 491-521 (QGTG…CVLD). Residue Lys-287 forms a Glycyl lysine isopeptide (Lys-Gly) (interchain with G-Cter in SUMO2) linkage.

Belongs to the WD repeat EBI family. As to quaternary structure, probable component of the N-Cor repressor complex and some E3 ubiquitin ligase complex. Interacts with NCOR2. In terms of tissue distribution, fetal brain and prostate. Expressed in the cochlear spiral ganglion neurons, and in outer and inner hair cells.

Its subcellular location is the nucleus. In terms of biological role, F-box-like protein involved in the recruitment of the ubiquitin/19S proteasome complex to nuclear receptor-regulated transcription units. Plays an essential role in transcription activation mediated by nuclear receptors. Probably acts as integral component of corepressor complexes that mediates the recruitment of the 19S proteasome complex, leading to the subsequent proteasomal degradation of transcription repressor complexes, thereby allowing cofactor exchange. The polypeptide is F-box-like/WD repeat-containing protein TBL1Y (TBL1Y) (Homo sapiens (Human)).